Reading from the N-terminus, the 595-residue chain is Outer dynein arm-docking complex subunit 3 (595 aa).

A disordered region spans residues 1 to 69 (MTSPLCRAAS…RGAGKPSVHS (69 aa)). Coiled-coil stretches lie at residues 94–327 (WNIK…REHL) and 385–473 (FAQL…ASKL).

Component of the outer dynein arm-docking complex along with ODAD1, ODAD2, ODAD4 and CLXN. Interacts with ODAD1. Interacts with PIERCE1 and PIERCE2; the interactions link the outer dynein arms docking complex (ODA-DC) to the internal microtubule inner proteins (MIP) in cilium axoneme.

The protein localises to the cytoplasm. Its subcellular location is the cytoskeleton. The protein resides in the cilium basal body. It localises to the microtubule organizing center. It is found in the centrosome. The protein localises to the centriole. Its subcellular location is the cilium axoneme. Its function is as follows. Component of the outer dynein arm-docking complex (ODA-DC) that mediates outer dynein arms (ODA) binding onto the doublet microtubule. Involved in mediating assembly of both ODAs and their axonemal docking complex onto ciliary microtubules. This Homo sapiens (Human) protein is Outer dynein arm-docking complex subunit 3.